Here is a 423-residue protein sequence, read N- to C-terminus: Riboflavin biosynthesis protein RibBA (423 aa).

The segment at 1-204 (MTRLDSVERA…IADLIEWRRK (204 aa)) is DHBP synthase. Residues 28 to 29 (RE), Asp33, 141 to 145 (RPGHT), and Glu165 each bind D-ribulose 5-phosphate. A Mg(2+)-binding site is contributed by Glu29. His144 provides a ligand contact to Mg(2+). Residues 205–423 (HEKHIARVAE…AVPGEFGGAV (219 aa)) are GTP cyclohydrolase II. Residue 259–263 (RVHSE) coordinates GTP. The Zn(2+) site is built by Cys264, Cys275, and Cys277. GTP contacts are provided by residues Gln280, 303–305 (EGR), and Thr325. Residue Asp337 is the Proton acceptor; for GTP cyclohydrolase activity of the active site. Residue Arg339 is the Nucleophile; for GTP cyclohydrolase activity of the active site. The GTP site is built by Thr360 and Lys365.

This sequence in the N-terminal section; belongs to the DHBP synthase family. It in the C-terminal section; belongs to the GTP cyclohydrolase II family. Mg(2+) serves as cofactor. The cofactor is Mn(2+). Requires Zn(2+) as cofactor.

The enzyme catalyses D-ribulose 5-phosphate = (2S)-2-hydroxy-3-oxobutyl phosphate + formate + H(+). The catalysed reaction is GTP + 4 H2O = 2,5-diamino-6-hydroxy-4-(5-phosphoribosylamino)-pyrimidine + formate + 2 phosphate + 3 H(+). It functions in the pathway cofactor biosynthesis; riboflavin biosynthesis; 2-hydroxy-3-oxobutyl phosphate from D-ribulose 5-phosphate: step 1/1. It participates in cofactor biosynthesis; riboflavin biosynthesis; 5-amino-6-(D-ribitylamino)uracil from GTP: step 1/4. In terms of biological role, catalyzes the conversion of D-ribulose 5-phosphate to formate and 3,4-dihydroxy-2-butanone 4-phosphate. Functionally, catalyzes the conversion of GTP to 2,5-diamino-6-ribosylamino-4(3H)-pyrimidinone 5'-phosphate (DARP), formate and pyrophosphate. This is Riboflavin biosynthesis protein RibBA from Mycolicibacterium gilvum (strain PYR-GCK) (Mycobacterium gilvum (strain PYR-GCK)).